The primary structure comprises 1076 residues: Guanylyl cyclase C (1076 aa).

An N-terminal signal peptide occupies residues 1–23; that stretch reads MKSPLLGLVVWSLLLQLLQPGLA. The Extracellular segment spans residues 24-433; sequence FWNSQISQNC…PHDIPGLGPH (410 aa). Asn35, Asn82, Asn191, Asn198, Asn287, Asn306, Asn310, Asn348, and Asn405 each carry an N-linked (GlcNAc...) asparagine glycan. A helical membrane pass occupies residues 434-457; the sequence is ILLIAVCTLAGVVVLILLIALLVL. Over 458–1076 the chain is Cytoplasmic; the sequence is RKYKKDNELR…NTTDQDSTYF (619 aa). A Protein kinase domain is found at 492 to 752; that stretch reads LKIDDDKKRD…KIENTLAKIF (261 aa). Residues 827-957 enclose the Guanylate cyclase domain; that stretch reads TVYFSDIVGF…DTVNTASRME (131 aa).

It belongs to the adenylyl cyclase class-4/guanylyl cyclase family. In terms of assembly, homotrimer. Interacts via its C-terminal region with NHERF4. Interacts with the lectin chaperone VIP36. Post-translationally, glycosylation at Asn-62 is required for interaction with VIP36 while glycosylation at Asn-348 and Asn-405 modulates ligand-mediated GC-C activation.

The protein resides in the cell membrane. It localises to the endoplasmic reticulum membrane. The catalysed reaction is GTP = 3',5'-cyclic GMP + diphosphate. Functionally, guanylyl cyclase that catalyzes synthesis of cyclic GMP (cGMP) from GTP. The polypeptide is Guanylyl cyclase C (GUCY2C) (Cavia porcellus (Guinea pig)).